A 174-amino-acid polypeptide reads, in one-letter code: Guided entry of tail-anchored proteins factor 1 (174 aa).

Topologically, residues 1-8 (MSASETDR) are lumenal. The helical transmembrane segment at 9–29 (WAWLLVLSFVFGCNLLRILLP) threads the bilayer. Residues 30–99 (SLSSFISRVL…VKARTAQLAK (70 aa)) lie on the Cytoplasmic side of the membrane. The stretch at 39–94 (LQKDAEQESQMRAEIQGMKQELSTVNMMDEFARYARLERKINKMTDKLKTHVKART) forms a coiled coil. An interaction with GET3/TRC40 region spans residues 39–97 (LQKDAEQESQMRAEIQGMKQELSTVNMMDEFARYARLERKINKMTDKLKTHVKARTAQL). Residues 100–120 (IKWFISVAFYILQAALMISLI) traverse the membrane as a helical segment. Residues 121 to 148 (WKYYSVPVAVVPSKWITPLDRLVAFPTR) are Lumenal-facing. The chain crosses the membrane as a helical span at residues 149–169 (VAGGIGITCWILVCNKVVAIV). At 170 to 174 (LHPFS) the chain is on the cytoplasmic side.

It belongs to the WRB/GET1 family. Component of the Golgi to ER traffic (GET) complex, which is composed of GET1, CAMLG/GET2 and GET3. Within the complex, GET1 and CAMLG form a heterotetramer which is stabilized by phosphatidylinositol binding and which binds to the GET3 homodimer. Interacts with CAMLG/GET2 (via C-terminus). GET3 shows a higher affinity for CAMLG than for GET1.

It localises to the endoplasmic reticulum membrane. Functionally, required for the post-translational delivery of tail-anchored (TA) proteins to the endoplasmic reticulum. Together with CAMLG/GET2, acts as a membrane receptor for soluble GET3/TRC40, which recognizes and selectively binds the transmembrane domain of TA proteins in the cytosol. Required to ensure correct topology and ER insertion of CAMLG. The protein is Guided entry of tail-anchored proteins factor 1 of Mus musculus (Mouse).